The chain runs to 1245 residues: ABC transporter B family member 13 (1245 aa).

Over residues 1–14 the composition is skewed to polar residues; that stretch reads MDNTERSSNGNIQA. Positions 1–20 are disordered; it reads MDNTERSSNGNIQAETEAKE. The region spanning 47–336 is the ABC transmembrane type-1 1 domain; the sequence is MLLGGLGACI…AAPSLSAIAK (290 aa). The helical transmembrane segment at 48 to 68 threads the bilayer; it reads LLGGLGACIHGATLPLFFVFF. A glycan (N-linked (GlcNAc...) asparagine) is linked at Asn-77. A run of 5 helical transmembrane segments spans residues 94–114, 171–191, 195–215, 276–296, and 314–334; these read LYLV…VSCW, HVLR…LSVW, LLTL…AIVM, LGVG…LWYA, and ILNV…LSAI. Asn-351 and Asn-391 each carry an N-linked (GlcNAc...) asparagine glycan. Residues 372-607 form the ABC transporter 1 domain; sequence IEFQKVSFAY…GGDYATLVNC (236 aa). 406 to 413 contacts ATP; the sequence is GPSGSGKS. The span at 610-629 shows a compositional bias: polar residues; the sequence is TEPQENSRSIMSETCKSQAG. Residues 610 to 660 are disordered; it reads TEPQENSRSIMSETCKSQAGSSSSRRVSSSRRTSSFRVDQEKTKNDDSKKD. Low complexity predominate over residues 630 to 646; the sequence is SSSSRRVSSSRRTSSFR. Residues 647–660 are compositionally biased toward basic and acidic residues; that stretch reads VDQEKTKNDDSKKD. The 289-residue stretch at 681–969 folds into the ABC transmembrane type-1 2 domain; sequence ALLGSIGAVL…TLALTPDIVK (289 aa). A run of 2 helical transmembrane segments spans residues 686–706 and 725–745; these read IGAV…AYVL and AIIF…QHYF. N-linked (GlcNAc...) asparagine glycosylation is present at Asn-778. 4 helical membrane-spanning segments follow: residues 805–822, 828–848, 913–933, and 947–967; these read IVQN…AFFY, AVVT…QLFL, LSQF…SVLI, and FMVL…TPDI. An ABC transporter 2 domain is found at 1004-1240; it reads IEFRNVSFVY…PNGFYKQLTS (237 aa). Asn-1008 carries N-linked (GlcNAc...) asparagine glycosylation. ATP is bound at residue 1039-1046; that stretch reads GPSGSGKS. An N-linked (GlcNAc...) asparagine glycan is attached at Asn-1106.

This sequence belongs to the ABC transporter superfamily. ABCB family. Multidrug resistance exporter (TC 3.A.1.201) subfamily.

The protein localises to the membrane. The chain is ABC transporter B family member 13 (ABCB13) from Arabidopsis thaliana (Mouse-ear cress).